The chain runs to 77 residues: Putative snRNP Sm-like protein (77 aa).

The Sm domain maps to 8-77 (PTLRMMLDYV…DSVVVITPAA (70 aa)).

It belongs to the snRNP Sm proteins family.

The sequence is that of Putative snRNP Sm-like protein from Aeropyrum pernix (strain ATCC 700893 / DSM 11879 / JCM 9820 / NBRC 100138 / K1).